The following is a 484-amino-acid chain: Glutamate--tRNA ligase (484 aa).

The 'HIGH' region motif lies at Pro-11–Asn-21. The 'KMSKS' region signature appears at Lys-252–Arg-256. Position 255 (Lys-255) interacts with ATP.

It belongs to the class-I aminoacyl-tRNA synthetase family. Glutamate--tRNA ligase type 1 subfamily. As to quaternary structure, monomer.

The protein localises to the cytoplasm. The catalysed reaction is tRNA(Glu) + L-glutamate + ATP = L-glutamyl-tRNA(Glu) + AMP + diphosphate. Its function is as follows. Catalyzes the attachment of glutamate to tRNA(Glu) in a two-step reaction: glutamate is first activated by ATP to form Glu-AMP and then transferred to the acceptor end of tRNA(Glu). This Staphylococcus aureus (strain Newman) protein is Glutamate--tRNA ligase.